The sequence spans 483 residues: Glycogen synthase (483 aa).

K18 serves as a coordination point for ADP-alpha-D-glucose.

It belongs to the glycosyltransferase 1 family. Bacterial/plant glycogen synthase subfamily.

It carries out the reaction [(1-&gt;4)-alpha-D-glucosyl](n) + ADP-alpha-D-glucose = [(1-&gt;4)-alpha-D-glucosyl](n+1) + ADP + H(+). The protein operates within glycan biosynthesis; glycogen biosynthesis. Synthesizes alpha-1,4-glucan chains using ADP-glucose. In Rhodopseudomonas palustris (strain TIE-1), this protein is Glycogen synthase.